The primary structure comprises 548 residues: MDSQRNLLVIALLFVSFMIWQAWEQDKNPQPQTQQTTQTTTTAAGSAADQGVPASGQGKLITVKTDVLDLTINTRGGDVEQALLPTYPKELGSKEPFQLLETTPQFIYQAQSGLTGRDGPDNPANGPRPLYSVDNDTFVLADGQNELHVPMTWTDAAGNTFTKTFVLKRGEYAVNVNYSVQNAGEKPLEISTFGQLKQSINLPSHRDTGSSNFALHTFRGAAYSTPDEKYEKYKFDTIADNENLNVSSNGGWVAMLQQYFATAWIPRNDGTNNFYTANLGNGIAAIGYKSQPVLVQPGQTGAMTSTLWVGPEIQDKMAAVAPHLDLTVDYGWLWFISQPLFKLLKWIHSFLGNWGFSIIVITFIVRGIMYPLTKAQYTSMAKMRMLQPKIQAMRERLGDDKQRQSQEMMALYKAEKVNPLGGCFPLIIQMPIFLALYYMLMGSIELRHAPFALWIHDLSAQDPYYILPILMGVTMFFIQKMSPTTVTDPMQQKIMTFMPVIFTVFFLWFPSGLVLYYIVSNLVTIIQQQLIYRGLEKRGLHSREKKSS.

The chain crosses the membrane as a helical span at residues 6 to 26; the sequence is NLLVIALLFVSFMIWQAWEQD. Residues 28-54 form a disordered region; it reads NPQPQTQQTTQTTTTAAGSAADQGVPA. The segment covering 29-42 has biased composition (low complexity); the sequence is PQPQTQQTTQTTTT. The next 4 membrane-spanning stretches (helical) occupy residues 350 to 370, 424 to 444, 458 to 478, and 499 to 519; these read FLGN…GIMY, FPLI…MGSI, LSAQ…MFFI, and PVIF…YYIV.

It belongs to the OXA1/ALB3/YidC family. Type 1 subfamily. As to quaternary structure, interacts with the Sec translocase complex via SecD. Specifically interacts with transmembrane segments of nascent integral membrane proteins during membrane integration.

It is found in the cell inner membrane. In terms of biological role, required for the insertion and/or proper folding and/or complex formation of integral membrane proteins into the membrane. Involved in integration of membrane proteins that insert both dependently and independently of the Sec translocase complex, as well as at least some lipoproteins. Aids folding of multispanning membrane proteins. In Citrobacter koseri (strain ATCC BAA-895 / CDC 4225-83 / SGSC4696), this protein is Membrane protein insertase YidC.